Consider the following 168-residue polypeptide: Photosystem I assembly protein Ycf3 (168 aa).

3 TPR repeats span residues 35–68, 72–105, and 120–153; these read AFTY…EIDP, SYIL…NPFL, and GEQA…TPGN.

It belongs to the Ycf3 family.

Its subcellular location is the plastid. It is found in the chloroplast thylakoid membrane. In terms of biological role, essential for the assembly of the photosystem I (PSI) complex. May act as a chaperone-like factor to guide the assembly of the PSI subunits. This Solanum lycopersicum (Tomato) protein is Photosystem I assembly protein Ycf3.